A 182-amino-acid polypeptide reads, in one-letter code: Ribosome-recycling factor (182 aa).

Belongs to the RRF family.

Its subcellular location is the cytoplasm. Its function is as follows. Responsible for the release of ribosomes from messenger RNA at the termination of protein biosynthesis. May increase the efficiency of translation by recycling ribosomes from one round of translation to another. In Gloeobacter violaceus (strain ATCC 29082 / PCC 7421), this protein is Ribosome-recycling factor.